The primary structure comprises 382 residues: Mannitol-1-phosphate 5-dehydrogenase (382 aa).

3-14 lines the NAD(+) pocket; the sequence is ALHFGAGNIGRG. At K269 the chain carries N6-acetyllysine.

Belongs to the mannitol dehydrogenase family.

It catalyses the reaction D-mannitol 1-phosphate + NAD(+) = beta-D-fructose 6-phosphate + NADH + H(+). The chain is Mannitol-1-phosphate 5-dehydrogenase from Escherichia coli O127:H6 (strain E2348/69 / EPEC).